The primary structure comprises 493 residues: Galactose-1-phosphate uridylyltransferase 2 (493 aa).

This sequence belongs to the galactose-1-phosphate uridylyltransferase type 2 family.

It is found in the cytoplasm. The catalysed reaction is alpha-D-galactose 1-phosphate + UDP-alpha-D-glucose = alpha-D-glucose 1-phosphate + UDP-alpha-D-galactose. Its pathway is carbohydrate metabolism; galactose metabolism. The chain is Galactose-1-phosphate uridylyltransferase 2 (galT2) from Streptococcus pneumoniae serotype 4 (strain ATCC BAA-334 / TIGR4).